The chain runs to 277 residues: Ribosomal RNA small subunit methyltransferase A (277 aa).

S-adenosyl-L-methionine contacts are provided by His-15, Leu-17, Gly-42, Glu-64, Asp-89, and Asn-109.

The protein belongs to the class I-like SAM-binding methyltransferase superfamily. rRNA adenine N(6)-methyltransferase family. RsmA subfamily.

The protein resides in the cytoplasm. It catalyses the reaction adenosine(1518)/adenosine(1519) in 16S rRNA + 4 S-adenosyl-L-methionine = N(6)-dimethyladenosine(1518)/N(6)-dimethyladenosine(1519) in 16S rRNA + 4 S-adenosyl-L-homocysteine + 4 H(+). Specifically dimethylates two adjacent adenosines (A1518 and A1519) in the loop of a conserved hairpin near the 3'-end of 16S rRNA in the 30S particle. May play a critical role in biogenesis of 30S subunits. The polypeptide is Ribosomal RNA small subunit methyltransferase A (Synechococcus sp. (strain CC9311)).